The primary structure comprises 143 residues: Putative nickel-responsive regulator (143 aa).

H82, H97, H99, and C105 together coordinate Ni(2+).

Belongs to the transcriptional regulatory CopG/NikR family. The cofactor is Ni(2+).

Functionally, transcriptional regulator. This chain is Putative nickel-responsive regulator, found in Helicobacter hepaticus (strain ATCC 51449 / 3B1).